The sequence spans 265 residues: NAD kinase 1 (265 aa).

The active-site Proton acceptor is Asp-45. Residues 45 to 46 (DG), 122 to 123 (NE), Arg-148, Asp-150, and Ala-185 each bind NAD(+).

Belongs to the NAD kinase family. A divalent metal cation serves as cofactor.

The protein localises to the cytoplasm. It carries out the reaction NAD(+) + ATP = ADP + NADP(+) + H(+). In terms of biological role, involved in the regulation of the intracellular balance of NAD and NADP, and is a key enzyme in the biosynthesis of NADP. Catalyzes specifically the phosphorylation on 2'-hydroxyl of the adenosine moiety of NAD to yield NADP. The chain is NAD kinase 1 from Bacillus anthracis.